The primary structure comprises 67 residues: Conotoxin Lt5.9 (67 aa).

The first 19 residues, 1 to 19 (MLCLPVFIILLLLASPAAP), serve as a signal peptide directing secretion. Residues 20-46 (KSFETKVQSDLTRTDGNMETEENLGEV) constitute a propeptide that is removed on maturation.

Belongs to the conotoxin T superfamily. Post-translationally, contains 2 disulfide bonds that can be either 'C1-C3, C2-C4' or 'C1-C4, C2-C3', since these disulfide connectivities have been observed for conotoxins with cysteine framework V (for examples, see AC P0DQQ7 and AC P81755). In terms of tissue distribution, expressed by the venom duct.

It localises to the secreted. In Conus litteratus (Lettered cone), this protein is Conotoxin Lt5.9.